The primary structure comprises 616 residues: Dihydroxy-acid dehydratase (616 aa).

Aspartate 81 is a Mg(2+) binding site. Cysteine 122 contacts [2Fe-2S] cluster. Positions 123 and 124 each coordinate Mg(2+). N6-carboxylysine is present on lysine 124. Cysteine 195 contacts [2Fe-2S] cluster. Glutamate 491 is a Mg(2+) binding site. Serine 517 acts as the Proton acceptor in catalysis.

Belongs to the IlvD/Edd family. Homodimer. [2Fe-2S] cluster serves as cofactor. The cofactor is Mg(2+).

It catalyses the reaction (2R)-2,3-dihydroxy-3-methylbutanoate = 3-methyl-2-oxobutanoate + H2O. It carries out the reaction (2R,3R)-2,3-dihydroxy-3-methylpentanoate = (S)-3-methyl-2-oxopentanoate + H2O. It participates in amino-acid biosynthesis; L-isoleucine biosynthesis; L-isoleucine from 2-oxobutanoate: step 3/4. Its pathway is amino-acid biosynthesis; L-valine biosynthesis; L-valine from pyruvate: step 3/4. Its function is as follows. Functions in the biosynthesis of branched-chain amino acids. Catalyzes the dehydration of (2R,3R)-2,3-dihydroxy-3-methylpentanoate (2,3-dihydroxy-3-methylvalerate) into 2-oxo-3-methylpentanoate (2-oxo-3-methylvalerate) and of (2R)-2,3-dihydroxy-3-methylbutanoate (2,3-dihydroxyisovalerate) into 2-oxo-3-methylbutanoate (2-oxoisovalerate), the penultimate precursor to L-isoleucine and L-valine, respectively. This Edwardsiella ictaluri (strain 93-146) protein is Dihydroxy-acid dehydratase.